The sequence spans 1284 residues: Zinc finger protein 423 (1284 aa).

Disordered stretches follow at residues 1–64 and 87–117; these read MHKK…MEDE and AHRCPGDGDDDPQLSWVASSPSSKDVASPTQ. A compositionally biased stretch (basic and acidic residues) spans 34 to 46; that stretch reads CDQKTSRALEDRN. S47 and S50 each carry phosphoserine. Acidic residues predominate over residues 54–64; sequence RNEDDEDMEDE. The C2H2-type 1; degenerate zinc-finger motif lies at 67–93; sequence YTCDHCQQDFESLADLTDHRAHRCPGD. Over residues 102 to 117 the composition is skewed to polar residues; it reads WVASSPSSKDVASPTQ. 7 C2H2-type zinc fingers span residues 138–160, 166–188, 194–216, 222–244, 263–286, 295–318, and 323–345; these read YPCQFCDKSFIRLSYLKRHEQIH, FKCTYCSRLFKHKRSRDRHIKLH, YHCHECEAAFSRSDHLKIHLKTH, FKCTVCKRGFSSTSSLQSHMQAH, FMCDYCEDTFSQTEELEKHVLTRH, LQCIHCPEVFVDENTLLAHIHQAH, and HKCPMCPEQFSSVEGVYCHLDSH. The segment at 346-398 is disordered; the sequence is RQPDSSNHSVSPDPVLGSVASMSSATPDSSASVERGSTPDSTLKPLRGQKKMR. Over residues 363–377 the composition is skewed to low complexity; that stretch reads SVASMSSATPDSSAS. The segment at 409-433 adopts a C2H2-type 9; degenerate zinc-finger fold; it reads YSCPYCSKRDFNSLAVLEIHLKTIH. 3 C2H2-type zinc fingers span residues 441–464, 480–503, and 517–540; these read HTCQICLDSMPTLYNLNEHVRKLH, FHCNYCPEMFADINSLQEHIRVSH, and FFCNQCSMGFLTESSLTEHIQQAH. The C2H2-type 13; atypical zinc-finger motif lies at 563-588; sequence YSCPYCTNSPIFGSILKLTKHIKENH. Residues 590–624 are disordered; the sequence is NIPLAHSKKSKAEQSPVSSDVEVSSPKRQRLSASA. S604 carries the phosphoserine modification. Residues 604 to 615 are compositionally biased toward low complexity; that stretch reads SPVSSDVEVSSP. C2H2-type zinc fingers lie at residues 632–654, 662–684, 692–715, 720–743, 750–773, 781–803, and 807–830; these read YPCNQCDLKFSNFESFQTHLKLH, QACPQCKEDFDSQESLLQHLTVH, YVCESCDKQFSSVDDLQKHLLDMH, YHCTLCQEVFDSKVSIQVHLAVKH, YRCTACNWDFRKEADLQVHVKHSH, HKCIFCGETFSTEVELQCHITTH, and YNCKFCSKAFHAIILLEKHLREKH. A C2H2-type 21; degenerate zinc finger spans residues 886–908; it reads YGCDICGAAYTMEVLLQNHRLRD. 3 C2H2-type zinc fingers span residues 930 to 952, 959 to 981, and 1020 to 1042; these read HKCNVCSRTFFSENGLREHLQTH, YMCPICGERFPSLLTLTEHKVTH, and FRCVVCMQTVTSTLELKIHGTFH. Residue S1054 is modified to Phosphoserine. A C2H2-type 25; degenerate zinc finger spans residues 1064–1082; sequence YKCALCLKEFRSKQDLVKL. C2H2-type zinc fingers lie at residues 1120–1143, 1168–1190, 1198–1220, 1229–1252, and 1259–1282; these read LRCPECSVKFESAEDLESHMQVDH, YQCIKCQMTFENEREIQIHVANH, HECKLCNQMFDSPAKLLCHLIEH, FKCPVCFTVFVQANKLQQHIFAVH, and YDCSQCPQKFFFQTELQNHTMSQH. The segment covering 1136 to 1147 has biased composition (basic and acidic residues); it reads ESHMQVDHRDLT. Residues 1136–1163 are disordered; it reads ESHMQVDHRDLTPETSGPRKGTQTSPVP.

It belongs to the krueppel C2H2-type zinc-finger protein family. Homodimer. Interacts with EBF1. Interacts with SMAD1 and SMAD4. Interacts with PARP1. Interacts with CEP290. In terms of tissue distribution, expressed in brain, lung, skeletal muscle, heart, pancreas and kidney but not liver or placenta. Also expressed in aorta, ovary, pituitary, small intestine, fetal brain, fetal kidney and, within the adult brain, in the substantia nigra, medulla, amygdala, thalamus and cerebellum.

Its subcellular location is the nucleus. Transcription factor that can both act as an activator or a repressor depending on the context. Plays a central role in BMP signaling and olfactory neurogenesis. Associates with SMADs in response to BMP2 leading to activate transcription of BMP target genes. Acts as a transcriptional repressor via its interaction with EBF1, a transcription factor involved in terminal olfactory receptor neurons differentiation; this interaction preventing EBF1 to bind DNA and activate olfactory-specific genes. Involved in olfactory neurogenesis by participating in a developmental switch that regulates the transition from differentiation to maturation in olfactory receptor neurons. Controls proliferation and differentiation of neural precursors in cerebellar vermis formation. The polypeptide is Zinc finger protein 423 (ZNF423) (Homo sapiens (Human)).